The chain runs to 160 residues: Transcription elongation factor GreA (160 aa).

It belongs to the GreA/GreB family.

Functionally, necessary for efficient RNA polymerase transcription elongation past template-encoded arresting sites. The arresting sites in DNA have the property of trapping a certain fraction of elongating RNA polymerases that pass through, resulting in locked ternary complexes. Cleavage of the nascent transcript by cleavage factors such as GreA or GreB allows the resumption of elongation from the new 3'terminus. GreA releases sequences of 2 to 3 nucleotides. This is Transcription elongation factor GreA from Francisella philomiragia subsp. philomiragia (strain ATCC 25017 / CCUG 19701 / FSC 153 / O#319-036).